Consider the following 416-residue polypeptide: Phosphatidylserine decarboxylase proenzyme, mitochondrial (416 aa).

Topologically, residues 1–67 are mitochondrial matrix; it reads MPGKSTRPLP…GRLHFPQLAL (67 aa). The helical transmembrane segment at 68–86 threads the bilayer; it reads RRRLGQLSCMSKPALKLRS. Over 87-416 the chain is Mitochondrial intermembrane; it reads WPLTVLYYLL…IRFGEALGSL (330 aa). Catalysis depends on charge relay system; for autoendoproteolytic cleavage activity residues D198, H274, and S385. S385 serves as the catalytic Schiff-base intermediate with substrate; via pyruvic acid; for decarboxylase activity. S385 carries the post-translational modification Pyruvic acid (Ser); by autocatalysis.

This sequence belongs to the phosphatidylserine decarboxylase family. PSD-B subfamily. Eukaryotic type I sub-subfamily. Heterodimer of a large membrane-associated beta subunit and a small pyruvoyl-containing alpha subunit. Requires pyruvate as cofactor. Post-translationally, is synthesized initially as an inactive proenzyme. Formation of the active enzyme involves a self-maturation process in which the active site pyruvoyl group is generated from an internal serine residue via an autocatalytic post-translational modification. Two non-identical subunits are generated from the proenzyme in this reaction, and the pyruvate is formed at the N-terminus of the alpha chain, which is derived from the carboxyl end of the proenzyme. The autoendoproteolytic cleavage occurs by a canonical serine protease mechanism, in which the side chain hydroxyl group of the serine supplies its oxygen atom to form the C-terminus of the beta chain, while the remainder of the serine residue undergoes an oxidative deamination to produce ammonia and the pyruvoyl prosthetic group on the alpha chain. During this reaction, the Ser that is part of the protease active site of the proenzyme becomes the pyruvoyl prosthetic group, which constitutes an essential element of the active site of the mature decarboxylase.

It localises to the mitochondrion inner membrane. The protein localises to the cytoplasm. It is found in the lipid droplet. The enzyme catalyses a 1,2-diacyl-sn-glycero-3-phospho-L-serine + H(+) = a 1,2-diacyl-sn-glycero-3-phosphoethanolamine + CO2. It functions in the pathway phospholipid metabolism; phosphatidylethanolamine biosynthesis. Its function is as follows. Catalyzes the formation of phosphatidylethanolamine (PtdEtn) from phosphatidylserine (PtdSer). Plays a central role in phospholipid metabolism and in the interorganelle trafficking of phosphatidylserine. May be involved in lipid droplet biogenesis at the endoplasmic reticulum membrane. The polypeptide is Phosphatidylserine decarboxylase proenzyme, mitochondrial (Bos taurus (Bovine)).